Consider the following 459-residue polypeptide: Anthocyanidin 3-O-glucoside 2''-O-glucosyltransferase (459 aa).

H20 acts as the Proton acceptor in catalysis. H20 serves as a coordination point for an anthocyanidin. Residue D117 is the Charge relay of the active site. UDP-alpha-D-glucose is bound by residues T138, V335, Q337, H352, W355, S357, and E360. Residue G375 participates in an anthocyanidin binding. The UDP-alpha-D-glucose site is built by D376 and Q377.

It belongs to the UDP-glycosyltransferase family.

It carries out the reaction an anthocyanidin 3-O-beta-D-glucoside + UDP-alpha-D-glucose = an anthocyanidin 3-O-sophoroside + UDP + 2 H(+). It participates in pigment biosynthesis; anthocyanin biosynthesis. Its function is as follows. Glycosyltransferase that mediates the glucosylation of anthocyanidin 3-O-glucosides to yield anthocyanidin 3-O-sophorosides. 3-O-sophoroside derivatives are required for the color of flowers. This Ipomoea purpurea (Common morning glory) protein is Anthocyanidin 3-O-glucoside 2''-O-glucosyltransferase (3GGT).